Here is a 702-residue protein sequence, read N- to C-terminus: Elongation factor G (702 aa).

Positions 8–290 (ARYRNIGISA…AVIEYLPAPT (283 aa)) constitute a tr-type G domain. GTP-binding positions include 17–24 (AHIDAGKT), 88–92 (DTPGH), and 142–145 (NKMD).

It belongs to the TRAFAC class translation factor GTPase superfamily. Classic translation factor GTPase family. EF-G/EF-2 subfamily.

It is found in the cytoplasm. Catalyzes the GTP-dependent ribosomal translocation step during translation elongation. During this step, the ribosome changes from the pre-translocational (PRE) to the post-translocational (POST) state as the newly formed A-site-bound peptidyl-tRNA and P-site-bound deacylated tRNA move to the P and E sites, respectively. Catalyzes the coordinated movement of the two tRNA molecules, the mRNA and conformational changes in the ribosome. This is Elongation factor G from Photorhabdus laumondii subsp. laumondii (strain DSM 15139 / CIP 105565 / TT01) (Photorhabdus luminescens subsp. laumondii).